The following is a 391-amino-acid chain: tRNA (cytosine(38)-C(5))-methyltransferase (391 aa).

Positions 4–391 (LRVLELYSGI…VSKLLTVLCE (388 aa)) constitute an SAM-dependent MTase C5-type domain. S-adenosyl-L-methionine contacts are provided by residues 13–15 (IGG), D34, 57–58 (IE), and S76. Residue C79 is part of the active site. S376 serves as a coordination point for S-adenosyl-L-methionine.

Belongs to the class I-like SAM-binding methyltransferase superfamily. C5-methyltransferase family.

It localises to the cytoplasm. It carries out the reaction cytidine(38) in tRNA + S-adenosyl-L-methionine = 5-methylcytidine(38) in tRNA + S-adenosyl-L-homocysteine + H(+). In terms of biological role, specifically methylates cytosine 38 in the anticodon loop of tRNA(Asp). Has higher activity on tRNA(Asp) modified with queuosine at position 34. In Rattus norvegicus (Rat), this protein is tRNA (cytosine(38)-C(5))-methyltransferase (Trdmt1).